The chain runs to 62 residues: Arabinogalactan protein 40 (62 aa).

A signal peptide spans 1–22 (MEMKNIFVALFISAVLVSSVSA). 4-hydroxyproline occurs at positions 28, 30, and 32. O-linked (Ara...) hydroxyproline glycosylation is found at Pro28, Pro30, and Pro32. Ser35 carries the GPI-anchor amidated serine lipid modification. A propeptide spans 36–62 (SASTVAFPVVGSIVAASLSAFLALLLQ) (removed in mature form).

This sequence belongs to the AG-peptide AGP family. In terms of processing, contains 4-hydroxyproline; hydroxylated on Pro-28, Pro-30 and Pro-32. O-glycosylated on hydroxyprolines; noncontiguous hydroxylproline residues are glycosylated with arabinogalactan.

The protein resides in the cell membrane. Functionally, proteoglycan that seems to be implicated in diverse developmental roles such as differentiation, cell-cell recognition, embryogenesis and programmed cell death. In Arabidopsis thaliana (Mouse-ear cress), this protein is Arabinogalactan protein 40.